Reading from the N-terminus, the 73-residue chain is Alpha-bungarotoxin N3 (73 aa).

5 disulfide bridges follow: Cys3–Cys23, Cys16–Cys43, Cys28–Cys32, Cys47–Cys58, and Cys59–Cys64.

Belongs to the three-finger toxin family. Long-chain subfamily. Type II alpha-neurotoxin sub-subfamily. As to quaternary structure, monomer in solution, homodimer in crystal state. Expressed by the venom gland.

Its subcellular location is the secreted. Binds with high affinity to muscular (alpha-1/CHRNA1) and neuronal (alpha-7/CHRNA7) nicotinic acetylcholine receptor (nAChR) and inhibits acetylcholine from binding to the receptor, thereby impairing neuromuscular and neuronal transmission. Mice injected with this toxin develop flaccid paralysis followed by death. Irreversibly inhibits twitches in a concentration-dependent manner in rat phrenic nerve-hemidiaphragm and chick biventer cervicis muscle. This Bungarus candidus (Malayan krait) protein is Alpha-bungarotoxin N3.